Consider the following 642-residue polypeptide: Threonine--tRNA ligase (642 aa).

Residues 1–61 (MPVITLPDGS…ENDATLSIIT (61 aa)) enclose the TGS domain. Residues 243–534 (DHRKIGKQLD…LTEEFAGFFP (292 aa)) are catalytic. Cys-334, His-385, and His-511 together coordinate Zn(2+).

Belongs to the class-II aminoacyl-tRNA synthetase family. As to quaternary structure, homodimer. It depends on Zn(2+) as a cofactor.

Its subcellular location is the cytoplasm. It catalyses the reaction tRNA(Thr) + L-threonine + ATP = L-threonyl-tRNA(Thr) + AMP + diphosphate + H(+). Its function is as follows. Catalyzes the attachment of threonine to tRNA(Thr) in a two-step reaction: L-threonine is first activated by ATP to form Thr-AMP and then transferred to the acceptor end of tRNA(Thr). Also edits incorrectly charged L-seryl-tRNA(Thr). This chain is Threonine--tRNA ligase, found in Salmonella agona (strain SL483).